The chain runs to 223 residues: MDRLKLEGVGMTSKRTRDRLVERLLEQGVTSQFVLELIANTPRHLFLDEALSHRAYEDASLPIGFGQTLSQPYIVARMTEILLGAAGDPKRVLEIGTGSGYQTCILAQAVEHVWSVERIKPLQDKAKQRLRHLGLNNVTYKHADGGFGWPEQGPFDAILSAAAPRDIPKSLLQQLAHNGVLVIPVGADEQVLTLVIRDGEEDKFITQKLEPVKFVPLLSGVTR.

Ser70 is a catalytic residue.

This sequence belongs to the methyltransferase superfamily. L-isoaspartyl/D-aspartyl protein methyltransferase family.

The protein resides in the cytoplasm. It catalyses the reaction [protein]-L-isoaspartate + S-adenosyl-L-methionine = [protein]-L-isoaspartate alpha-methyl ester + S-adenosyl-L-homocysteine. In terms of biological role, catalyzes the methyl esterification of L-isoaspartyl residues in peptides and proteins that result from spontaneous decomposition of normal L-aspartyl and L-asparaginyl residues. It plays a role in the repair and/or degradation of damaged proteins. The protein is Protein-L-isoaspartate O-methyltransferase of Saccharophagus degradans (strain 2-40 / ATCC 43961 / DSM 17024).